The primary structure comprises 158 residues: NAD(P)H-quinone oxidoreductase subunit J, chloroplastic (158 aa).

Belongs to the complex I 30 kDa subunit family. As to quaternary structure, NDH is composed of at least 16 different subunits, 5 of which are encoded in the nucleus.

The protein resides in the plastid. The protein localises to the chloroplast thylakoid membrane. The catalysed reaction is a plastoquinone + NADH + (n+1) H(+)(in) = a plastoquinol + NAD(+) + n H(+)(out). It catalyses the reaction a plastoquinone + NADPH + (n+1) H(+)(in) = a plastoquinol + NADP(+) + n H(+)(out). In terms of biological role, NDH shuttles electrons from NAD(P)H:plastoquinone, via FMN and iron-sulfur (Fe-S) centers, to quinones in the photosynthetic chain and possibly in a chloroplast respiratory chain. The immediate electron acceptor for the enzyme in this species is believed to be plastoquinone. Couples the redox reaction to proton translocation, and thus conserves the redox energy in a proton gradient. The protein is NAD(P)H-quinone oxidoreductase subunit J, chloroplastic of Crucihimalaya wallichii (Rock-cress).